Consider the following 530-residue polypeptide: 3-oxo-5-alpha-steroid 4-dehydrogenase (530 aa).

33–62 (DVVVVGWGGAGASAAIEAREQGAEVLVIER) contributes to the FAD binding site. Residues 395–415 (AWQCLFGGLWAFQSMPALALM) traverse the membrane as a helical segment.

It belongs to the FAD-dependent oxidoreductase 2 family. It depends on FAD as a cofactor.

Its subcellular location is the membrane. It carries out the reaction a 3-oxo-5alpha-steroid + A = a 3-oxo-Delta(4)-steroid + AH2. It catalyses the reaction 5alpha-androstan-3,17-dione + A = androst-4-ene-3,17-dione + AH2. The catalysed reaction is 5alpha-androst-1-ene-3,17-dione + A = androsta-1,4-diene-3,17-dione + AH2. Its activity is regulated as follows. Inhibition occurs with substrate concentrations above 25 uM. In terms of biological role, involved in the degradation of steroids having an A:B ring fusion in a trans configuration. Catalyzes the elimination of hydrogens located at positions 4 and 5 and the introduction of double bonds into ring A. In Comamonas testosteroni (Pseudomonas testosteroni), this protein is 3-oxo-5-alpha-steroid 4-dehydrogenase.